Consider the following 100-residue polypeptide: NADH-quinone oxidoreductase subunit K (100 aa).

3 helical membrane-spanning segments follow: residues 4–24 (TSYY…GVLL), 29–49 (IVVF…LVAF), and 60–80 (VIVF…LALL).

It belongs to the complex I subunit 4L family. NDH-1 is composed of 14 different subunits. Subunits NuoA, H, J, K, L, M, N constitute the membrane sector of the complex.

The protein resides in the cell membrane. It catalyses the reaction a quinone + NADH + 5 H(+)(in) = a quinol + NAD(+) + 4 H(+)(out). NDH-1 shuttles electrons from NADH, via FMN and iron-sulfur (Fe-S) centers, to quinones in the respiratory chain. The immediate electron acceptor for the enzyme in this species is believed to be ubiquinone. Couples the redox reaction to proton translocation (for every two electrons transferred, four hydrogen ions are translocated across the cytoplasmic membrane), and thus conserves the redox energy in a proton gradient. The chain is NADH-quinone oxidoreductase subunit K from Chloroflexus aurantiacus (strain ATCC 29366 / DSM 635 / J-10-fl).